The chain runs to 188 residues: RWD domain-containing protein 4 (188 aa).

The RWD domain occupies 9 to 111 (MELEALRSIY…EYAKDNKEQF (103 aa)). A disordered region spans residues 132–167 (TPSAAPSSKKKDKKEQLSKAQKRKLADKTDHKGELP). A compositionally biased stretch (basic and acidic residues) spans 155–166 (KLADKTDHKGEL).

This chain is RWD domain-containing protein 4 (Rwdd4), found in Rattus norvegicus (Rat).